We begin with the raw amino-acid sequence, 231 residues long: MSDPAIEVAPVPVASPAKAKKEKKPKSDKPKKPKAPRTHPPVSDMIVNAIKTLKERGGSSVQAIKKFLVAQYKVDTDKLSPFIKKYLKSAVEKGQLLQTKGKGASGSFKLPAAAKKEKVVKKVTKKVTEKKPKKAVSKPKTGEKKVKKTIAKKPKVASATKIKKPVAKTTKKPAAAKPTKKVAAKPKAAPKPKAAPKPKVAKPKKAAAPKAKKPAAEKKPKAAKKPSAKKA.

A compositionally biased stretch (low complexity) spans 1–17 (MSDPAIEVAPVPVASPA). 2 disordered regions span residues 1–44 (MSDP…PVSD) and 124–231 (TKKV…AKKA). Residues 38 to 112 (THPPVSDMIV…GASGSFKLPA (75 aa)) form the H15 domain. Basic residues-rich tracts occupy residues 145–171 (KVKK…KTTK), 178–213 (PTKK…KAKK), and 221–231 (KAAKKPSAKKA).

Belongs to the histone H1/H5 family.

It localises to the nucleus. The protein localises to the chromosome. In terms of biological role, histones H1 are necessary for the condensation of nucleosome chains into higher-order structures. This is Histone H1 from Chironomus thummi thummi (Midge).